Here is a 418-residue protein sequence, read N- to C-terminus: NADH-quinone oxidoreductase subunit D (418 aa).

The protein belongs to the complex I 49 kDa subunit family. As to quaternary structure, NDH-1 is composed of 14 different subunits. Subunits NuoB, C, D, E, F, and G constitute the peripheral sector of the complex.

The protein localises to the cell inner membrane. The catalysed reaction is a quinone + NADH + 5 H(+)(in) = a quinol + NAD(+) + 4 H(+)(out). In terms of biological role, NDH-1 shuttles electrons from NADH, via FMN and iron-sulfur (Fe-S) centers, to quinones in the respiratory chain. The immediate electron acceptor for the enzyme in this species is believed to be ubiquinone. Couples the redox reaction to proton translocation (for every two electrons transferred, four hydrogen ions are translocated across the cytoplasmic membrane), and thus conserves the redox energy in a proton gradient. The polypeptide is NADH-quinone oxidoreductase subunit D (Bordetella pertussis (strain Tohama I / ATCC BAA-589 / NCTC 13251)).